A 224-amino-acid polypeptide reads, in one-letter code: Glycerol-3-phosphate acyltransferase (224 aa).

6 helical membrane passes run 3–23, 54–74, 90–112, 127–147, 152–172, and 183–203; these read IFLS…IGSL, VFGY…VVFA, LYFY…PIYF, LISI…LLLF, VSLS…IPWM, and GFGQ…LIFW.

The protein belongs to the PlsY family. As to quaternary structure, probably interacts with PlsX.

It localises to the cell membrane. It carries out the reaction an acyl phosphate + sn-glycerol 3-phosphate = a 1-acyl-sn-glycero-3-phosphate + phosphate. Its pathway is lipid metabolism; phospholipid metabolism. In terms of biological role, catalyzes the transfer of an acyl group from acyl-phosphate (acyl-PO(4)) to glycerol-3-phosphate (G3P) to form lysophosphatidic acid (LPA). This enzyme utilizes acyl-phosphate as fatty acyl donor, but not acyl-CoA or acyl-ACP. This chain is Glycerol-3-phosphate acyltransferase, found in Mycoplasmopsis synoviae (strain 53) (Mycoplasma synoviae).